The primary structure comprises 194 residues: Potassium-transporting ATPase KdpC subunit (194 aa).

A helical membrane pass occupies residues 12 to 34; sequence LFLLLLTGGVYPLLTTALGQWWF.

This sequence belongs to the KdpC family. In terms of assembly, the system is composed of three essential subunits: KdpA, KdpB and KdpC.

It localises to the cell inner membrane. Its function is as follows. Part of the high-affinity ATP-driven potassium transport (or Kdp) system, which catalyzes the hydrolysis of ATP coupled with the electrogenic transport of potassium into the cytoplasm. This subunit acts as a catalytic chaperone that increases the ATP-binding affinity of the ATP-hydrolyzing subunit KdpB by the formation of a transient KdpB/KdpC/ATP ternary complex. This is Potassium-transporting ATPase KdpC subunit from Salmonella choleraesuis (strain SC-B67).